Here is a 110-residue protein sequence, read N- to C-terminus: Parvalbumin alpha (110 aa).

At serine 2 the chain carries N-acetylserine. 2 positions are modified to phosphoserine: serine 2 and serine 24. EF-hand domains follow at residues 39 to 74 (KSAD…FSPD) and 78 to 110 (LSAK…VAES). Ca(2+)-binding residues include aspartate 52, aspartate 54, serine 56, phenylalanine 58, glutamate 60, glutamate 63, aspartate 91, aspartate 93, aspartate 95, lysine 97, and glutamate 102.

Its function is as follows. In muscle, parvalbumin is thought to be involved in relaxation after contraction. It binds two calcium ions. In Homo sapiens (Human), this protein is Parvalbumin alpha (PVALB).